The sequence spans 126 residues: Fluoride-specific ion channel FluC 1 (126 aa).

A run of 4 helical transmembrane segments spans residues 5–25, 39–59, 69–89, and 100–120; these read FILA…LVGI, TLFI…LFAI, IFLI…SLDS, and AAGA…IAGI. Na(+) is bound by residues Gly77 and Thr80.

The protein belongs to the fluoride channel Fluc/FEX (TC 1.A.43) family.

It is found in the cell inner membrane. It catalyses the reaction fluoride(in) = fluoride(out). Its activity is regulated as follows. Na(+) is not transported, but it plays an essential structural role and its presence is essential for fluoride channel function. Fluoride-specific ion channel. Important for reducing fluoride concentration in the cell, thus reducing its toxicity. This chain is Fluoride-specific ion channel FluC 1, found in Nitrobacter hamburgensis (strain DSM 10229 / NCIMB 13809 / X14).